A 348-amino-acid polypeptide reads, in one-letter code: Erlin-1 (348 aa).

At 1–7 (MNMTQAR) the chain is on the cytoplasmic side. The helical transmembrane segment at 8 to 28 (VLVAAVVGLVAVLLYASIHKI) threads the bilayer. Residues 29 to 348 (EEGHLAVYYR…NLIQNKESTG (320 aa)) are Lumenal-facing. N-linked (GlcNAc...) asparagine glycosylation occurs at Asn108. Residue Lys269 is modified to N6-acetyllysine. Residues 321–333 (TGRESSHPSKEAL) show a composition bias toward basic and acidic residues. The tract at residues 321–348 (TGRESSHPSKEALEPSGENLIQNKESTG) is disordered. Positions 339-348 (NLIQNKESTG) are enriched in polar residues.

It belongs to the band 7/mec-2 family. As to quaternary structure, forms a heteromeric complex with ERLIN2. In complex with ERLIN2, interacts with RNF170. Interacts with AMFR and SYVN1. In terms of processing, deubiquitinated by USP25; leading to stabilization.

It localises to the endoplasmic reticulum membrane. In terms of biological role, component of the ERLIN1/ERLIN2 complex which mediates the endoplasmic reticulum-associated degradation (ERAD) of inositol 1,4,5-trisphosphate receptors (IP3Rs). Involved in regulation of cellular cholesterol homeostasis by regulation the SREBP signaling pathway. Binds cholesterol and may promote ER retention of the SCAP-SREBF complex. The protein is Erlin-1 of Pongo abelii (Sumatran orangutan).